Reading from the N-terminus, the 1091-residue chain is Multiple epidermal growth factor-like domains protein 11 (1091 aa).

A signal peptide spans Met-1–Ala-18. The Extracellular portion of the chain corresponds to Leu-19 to Ser-847. In terms of domain architecture, EMI spans Asp-23 to Pro-100. Cystine bridges form between Cys-27-Cys-88, Cys-53-Cys-62, Cys-87-Cys-98, Cys-102-Cys-117, Cys-119-Cys-128, Cys-145-Cys-153, Cys-147-Cys-160, Cys-162-Cys-171, Cys-184-Cys-196, Cys-190-Cys-203, Cys-205-Cys-214, Cys-227-Cys-239, Cys-233-Cys-246, and Cys-248-Cys-257. EGF-like domains lie at Asn-94 to Ser-129, Ser-142 to Glu-172, His-180 to Glu-215, His-223 to Ala-258, Phe-266 to Gln-301, Ser-314 to Gln-344, Tyr-398 to Ala-433, Tyr-441 to Ser-476, and Trp-484 to Glu-519. A glycan (N-linked (GlcNAc...) asparagine) is linked at Asn-269. Cystine bridges form between Cys-270–Cys-282, Cys-276–Cys-289, Cys-291–Cys-300, Cys-317–Cys-325, Cys-319–Cys-332, Cys-334–Cys-343, Cys-402–Cys-414, Cys-408–Cys-421, Cys-423–Cys-432, Cys-445–Cys-457, Cys-451–Cys-464, Cys-466–Cys-475, Cys-488–Cys-500, Cys-494–Cys-507, and Cys-509–Cys-518. Asn-530 is a glycosylation site (N-linked (GlcNAc...) asparagine). EGF-like domains lie at Trp-570 to Gln-605, Tyr-613 to Asn-650, Phe-658 to Ser-693, Phe-706 to Thr-736, Gly-749 to Glu-779, and Phe-787 to Asp-822. 18 disulfides stabilise this stretch: Cys-574–Cys-586, Cys-580–Cys-593, Cys-595–Cys-604, Cys-617–Cys-631, Cys-621–Cys-638, Cys-640–Cys-649, Cys-662–Cys-674, Cys-668–Cys-681, Cys-683–Cys-692, Cys-709–Cys-717, Cys-711–Cys-724, Cys-726–Cys-735, Cys-752–Cys-760, Cys-754–Cys-767, Cys-769–Cys-778, Cys-791–Cys-803, Cys-797–Cys-810, and Cys-812–Cys-821. Residues Val-848 to Phe-868 form a helical membrane-spanning segment. The Cytoplasmic segment spans residues Ala-869 to Thr-1091.

Belongs to the MEGF family. In terms of assembly, homomer. Does not interact with MEGF10.

It localises to the cell membrane. The protein resides in the basolateral cell membrane. May regulate the mosaic spacing of specific neuron subtypes in the retina through homotypic retinal neuron repulsion. Mosaics provide a mechanism to distribute each cell type evenly across the retina, ensuring that all parts of the visual field have access to a full set of processing elements. The chain is Multiple epidermal growth factor-like domains protein 11 (Megf11) from Mus musculus (Mouse).